Consider the following 149-residue polypeptide: D-aminoacyl-tRNA deacylase (149 aa).

The Gly-cisPro motif, important for rejection of L-amino acids motif lies at 137-138 (GP).

This sequence belongs to the DTD family. Homodimer.

The protein resides in the cytoplasm. It carries out the reaction glycyl-tRNA(Ala) + H2O = tRNA(Ala) + glycine + H(+). The catalysed reaction is a D-aminoacyl-tRNA + H2O = a tRNA + a D-alpha-amino acid + H(+). In terms of biological role, an aminoacyl-tRNA editing enzyme that deacylates mischarged D-aminoacyl-tRNAs. Also deacylates mischarged glycyl-tRNA(Ala), protecting cells against glycine mischarging by AlaRS. Acts via tRNA-based rather than protein-based catalysis; rejects L-amino acids rather than detecting D-amino acids in the active site. By recycling D-aminoacyl-tRNA to D-amino acids and free tRNA molecules, this enzyme counteracts the toxicity associated with the formation of D-aminoacyl-tRNA entities in vivo and helps enforce protein L-homochirality. The polypeptide is D-aminoacyl-tRNA deacylase (Thermoanaerobacter sp. (strain X514)).